Reading from the N-terminus, the 541-residue chain is Protein wntless homolog (541 aa).

At 1–15 the chain is on the cytoplasmic side; it reads MAGAIIENMSTKKLC. The helical transmembrane segment at 16–36 threads the bilayer; it reads IVGGILLVFQIVAFLVGGLIA. Topologically, residues 37–232 are lumenal; the sequence is PAPTTAVSYV…GIHQNGGFTK (196 aa). Positions 101-202 are interaction with Wnt proteins; sequence MEMSPWFQFM…KYYLLNIRLP (102 aa). A helical transmembrane segment spans residues 233 to 253; it reads VWFAMKTFLTPSIFIIMVWYW. Topologically, residues 254–268 are cytoplasmic; sequence RRITMMSRPPVLLEK. The helical transmembrane segment at 269 to 289 threads the bilayer; that stretch reads VIFALGISMTFINIPVEWFSI. The Lumenal portion of the chain corresponds to 290–303; that stretch reads GFDWTWMLLFGDIR. The helical transmembrane segment at 304–324 threads the bilayer; it reads QGIFYAMLLSFWIIFCGEHMM. The Cytoplasmic segment spans residues 325–331; the sequence is DQHERNH. A helical transmembrane segment spans residues 332–352; sequence IAGYWKQVGPIAVGSFCLFIF. Topologically, residues 353-380 are lumenal; it reads DMCERGVQLTNPFYSIWTTDVGTELAMA. A helical membrane pass occupies residues 381–401; it reads FIIVAGICLCLYFLFLCFMVF. The Cytoplasmic segment spans residues 402–431; the sequence is QVFRNISGKQSSLPAMSKVRRLHYEGLIFR. Residues 432–452 form a helical membrane-spanning segment; that stretch reads FKFLMLITLACAAMTVIFFIV. Residues 453–471 lie on the Lumenal side of the membrane; sequence SQVTEGHWKWGGVTVQVSS. The helical transmembrane segment at 472–492 threads the bilayer; it reads AFFTGIYGMWNLYVFALMFLY. Residues 493–541 lie on the Cytoplasmic side of the membrane; it reads APSHKNYGEDQSNGDLGVHSGEELQLTTTITHVDGPTEIYKLTRKEAQE.

The protein belongs to the wntless family. Interacts with WNT3A. Interacts with WNT1, WNT3 and WNT5A. N-glycosylated. As to expression, expressed in the brain, skeletal muscle, heart muscle, lung, gut, liver, and kidney (at protein level). In the brain, expressed in the cortex, striatum, ventral tegmentum, nucleus accumbens and to a lesser extent in the Purkinjie cells in the cerebellum. Expressed in eye iridocorneal angle.

The protein resides in the golgi apparatus membrane. It is found in the cytoplasmic vesicle membrane. The protein localises to the cell membrane. Its subcellular location is the endoplasmic reticulum membrane. It localises to the early endosome membrane. Regulates Wnt proteins sorting and secretion in a feedback regulatory mechanism. This reciprocal interaction plays a key role in the regulation of expression, subcellular location, binding and organelle-specific association of Wnt proteins. Also plays an important role in establishment of the anterior-posterior body axis formation during development. The polypeptide is Protein wntless homolog (Wls) (Rattus norvegicus (Rat)).